Consider the following 481-residue polypeptide: Glutamyl-tRNA(Gln) amidotransferase subunit A (481 aa).

Active-site charge relay system residues include Lys-77 and Ser-151. Catalysis depends on Ser-175, which acts as the Acyl-ester intermediate.

It belongs to the amidase family. GatA subfamily. In terms of assembly, heterotrimer of A, B and C subunits.

It carries out the reaction L-glutamyl-tRNA(Gln) + L-glutamine + ATP + H2O = L-glutaminyl-tRNA(Gln) + L-glutamate + ADP + phosphate + H(+). Functionally, allows the formation of correctly charged Gln-tRNA(Gln) through the transamidation of misacylated Glu-tRNA(Gln) in organisms which lack glutaminyl-tRNA synthetase. The reaction takes place in the presence of glutamine and ATP through an activated gamma-phospho-Glu-tRNA(Gln). This is Glutamyl-tRNA(Gln) amidotransferase subunit A from Rubrobacter xylanophilus (strain DSM 9941 / JCM 11954 / NBRC 16129 / PRD-1).